Reading from the N-terminus, the 364-residue chain is Variable large protein 21 (364 aa).

The first 26 residues, 1–26 (MRKRISAIINKLNISIMMMIVVLMIG), serve as a signal peptide directing secretion. The N-palmitoyl cysteine moiety is linked to residue Cys27. The S-diacylglycerol cysteine moiety is linked to residue Cys27.

The protein belongs to the variable large protein (Vlp) family. Alpha subfamily.

Its subcellular location is the cell outer membrane. In terms of biological role, the Vlp and Vsp proteins are antigenically distinct proteins, only one vlp or vsp gene is transcriptionally active at any one time. Switching between these genes is a mechanism of host immune response evasion. In Borrelia hermsii, this protein is Variable large protein 21.